Here is a 358-residue protein sequence, read N- to C-terminus: Histidinol-phosphate aminotransferase (358 aa).

Position 211 is an N6-(pyridoxal phosphate)lysine (Lys211).

It belongs to the class-II pyridoxal-phosphate-dependent aminotransferase family. Histidinol-phosphate aminotransferase subfamily. In terms of assembly, homodimer. Requires pyridoxal 5'-phosphate as cofactor.

It carries out the reaction L-histidinol phosphate + 2-oxoglutarate = 3-(imidazol-4-yl)-2-oxopropyl phosphate + L-glutamate. It participates in amino-acid biosynthesis; L-histidine biosynthesis; L-histidine from 5-phospho-alpha-D-ribose 1-diphosphate: step 7/9. In Blochmanniella pennsylvanica (strain BPEN), this protein is Histidinol-phosphate aminotransferase.